The following is a 939-amino-acid chain: UvrABC system protein A (939 aa).

32-39 (GLSGSGKS) contacts ATP. Residues 252–279 (CADCGISIDELAPRMFSFNSPFGKCERC) form a C4-type zinc finger. 2 consecutive ABC transporter domains span residues 309–588 (WGDS…ENSL) and 608–936 (GNGN…KYLK). Residue 640–647 (GVSGSGKS) coordinates ATP. The C4-type zinc-finger motif lies at 739-765 (CEACSGDGIIKIEMQFLSDVYVPCEVC).

This sequence belongs to the ABC transporter superfamily. UvrA family. In terms of assembly, forms a heterotetramer with UvrB during the search for lesions.

The protein resides in the cytoplasm. The UvrABC repair system catalyzes the recognition and processing of DNA lesions. UvrA is an ATPase and a DNA-binding protein. A damage recognition complex composed of 2 UvrA and 2 UvrB subunits scans DNA for abnormalities. When the presence of a lesion has been verified by UvrB, the UvrA molecules dissociate. This chain is UvrABC system protein A, found in Clostridium perfringens (strain 13 / Type A).